Here is a 1106-residue protein sequence, read N- to C-terminus: DNA polymerase delta catalytic subunit (1106 aa).

A disordered region spans residues 1-28; it reads MDGKRRPGPGPGVPPKRARGGLWDEDEA. The short motif at 4-19 is the Nuclear localization signal element; that stretch reads KRRPGPGPGVPPKRAR. R19 is modified (omega-N-methylarginine). K573 is covalently cross-linked (Glycyl lysine isopeptide (Lys-Gly) (interchain with G-Cter in SUMO2)). 4 residues coordinate Zn(2+): C1011, C1014, C1025, and C1028. Residues 1011–1028 form a CysA-type zinc finger; that stretch reads CIGCRTVLSHQGAVCKFC. [4Fe-4S] cluster-binding residues include C1057, C1060, C1070, and C1075. The CysB motif signature appears at 1057–1075; it reads CQRCQGSLHEDVICTSRDC.

The protein belongs to the DNA polymerase type-B family. As to quaternary structure, component of the tetrameric DNA polymerase delta complex (Pol-delta4), which consists of POLD1/p125, POLD2/p50, POLD3/p66/p68 and POLD4/p12, with POLD1 bearing both DNA polymerase and 3' to 5' proofreading exonuclease activities. Within Pol-delta4, directly interacts with POLD2 and POLD4. Following genotoxic stress by DNA-damaging agents, such as ultraviolet light and methyl methanesulfonate, or by replication stress induced by treatment with hydroxyurea or aphidicolin, Pol-delta4 is converted into a trimeric form of the complex (Pol-delta3) by POLD4 degradation. Pol-delta3 is the major form at S phase replication sites and DNA damage sites. POLD1 displays different catalytic properties depending upon the complex it is found in. It exhibits higher proofreading activity and fidelity than Pol-delta4, making it particularly well suited to respond to DNA damage. Directly interacts with PCNA, as do POLD3 and POLD4; this interaction stimulates Pol-delta4 polymerase activity. As POLD2 and POLD4, directly interacts with WRNIP1; this interaction stimulates DNA polymerase delta-mediated DNA synthesis, independently of the presence of PCNA. This stimulation may be due predominantly to an increase of initiation frequency and also to increased processivity. Also observed as a dimeric complex with POLD2 (Pol-delta2). Pol-delta2 is relatively insensitive to the PCNA stimulation (2-5-fold) compared to Pol-delta4 that is stimulated by over 50-fold. Interacts with POLDIP2; this interaction is indirect and most probably mediated through POLD2-binding. Interacts with CIAO1. Interacts with POLDIP2. Interacts with RFC1. It depends on [4Fe-4S] cluster as a cofactor.

Its subcellular location is the nucleus. It carries out the reaction DNA(n) + a 2'-deoxyribonucleoside 5'-triphosphate = DNA(n+1) + diphosphate. Its activity is regulated as follows. Regulated by alteration of quaternary structure. Exhibits burst rates of DNA synthesis are about 5 times faster in the presence of POLD4 (Pol-delta4 complex) than in its absence (Pol-delta3 complex), while the affinity of the enzyme for its DNA and dNTP substrates appears unchanged. The Pol-delta3 complex is more likely to proofread DNA synthesis because it cleaves single-stranded DNA twice as fast and transfers mismatched DNA from the polymerase to the exonuclease sites 9 times faster compared to the Pol-delta3 complex. Pol-delta3 also extends mismatched primers 3 times more slowly in the absence of POLD4. The conversion of Pol-delta4 into Pol-delta3 is induced by genotoxic stress or by replication stress leading POLD4 degradation. Stimulated in the presence of PCNA. This stimulation is further increased in the presence of KCTD13/PDIP1, most probably via direct interaction between KCTD13 and POLD2. Its function is as follows. As the catalytic component of the trimeric (Pol-delta3 complex) and tetrameric DNA polymerase delta complexes (Pol-delta4 complex), plays a crucial role in high fidelity genome replication, including in lagging strand synthesis, and repair. Exhibits both DNA polymerase and 3'- to 5'-exonuclease activities. Requires the presence of accessory proteins POLD2, POLD3 and POLD4 for full activity. Depending upon the absence (Pol-delta3) or the presence of POLD4 (Pol-delta4), displays differences in catalytic activity. Most notably, expresses higher proofreading activity in the context of Pol-delta3 compared with that of Pol-delta4. Although both Pol-delta3 and Pol-delta4 process Okazaki fragments in vitro, Pol-delta3 may be better suited to fulfill this task, exhibiting near-absence of strand displacement activity compared to Pol-delta4 and stalling on encounter with the 5'-blocking oligonucleotides. Pol-delta3 idling process may avoid the formation of a gap, while maintaining a nick that can be readily ligated. Along with DNA polymerase kappa, DNA polymerase delta carries out approximately half of nucleotide excision repair (NER) synthesis following UV irradiation. Under conditions of DNA replication stress, in the presence of POLD3 and POLD4, may catalyze the repair of broken replication forks through break-induced replication (BIR). Involved in the translesion synthesis (TLS) of templates carrying O6-methylguanine, 8oxoG or abasic sites. The sequence is that of DNA polymerase delta catalytic subunit (POLD1) from Bos taurus (Bovine).